The primary structure comprises 705 residues: p-hydroxybenzoic acid--AMP ligase FadD22 (705 aa).

Residues 541–619 (ERQRLVVDAV…GLAQYLEAEL (79 aa)) form the Carrier domain. Ser-579 bears the O-(pantetheine 4'-phosphoryl)serine mark.

It belongs to the ATP-dependent AMP-binding enzyme family.

It carries out the reaction holo-[4-hydroxyphenylalkanoate synthase] + 4-hydroxybenzoate + ATP = 4-hydroxyphenyl-[4-hydroxyphenylalkanoate synthase] + AMP + diphosphate. It functions in the pathway lipid metabolism; fatty acid biosynthesis. Functionally, catalyzes the adenylation of p-hydroxybenzoic acid (pHBA) to form p-hydroxybenzoic acid-AMP (pHBA-AMP), which is converted directly to p-hydroxybenzoyl-S-FadD22 (pHBA-S-FAdD22) thioester intermediate in a CoA-independent manner by attack of the phosphopantetheine thiol of FadD22. Usually, this intermediate primes the biosynthesis of the phenolphthiocerol (PPOL) by presenting the pHBA starter unit for elongation by Pks15/1, but M.tuberculosis lacks Pks15/1 due to a natural frameshift and thus is unable to produce PPOL. The polypeptide is p-hydroxybenzoic acid--AMP ligase FadD22 (fadD22) (Mycobacterium tuberculosis (strain CDC 1551 / Oshkosh)).